Here is a 317-residue protein sequence, read N- to C-terminus: Probable cell division protein WhiA (317 aa).

A DNA-binding region (H-T-H motif) is located at residues 281–314 (SLKELGKMLEPPVGKSGVNHRLRKIEKIAEELRK).

This sequence belongs to the WhiA family.

In terms of biological role, involved in cell division and chromosome segregation. This is Probable cell division protein WhiA from Clostridium acetobutylicum (strain ATCC 824 / DSM 792 / JCM 1419 / IAM 19013 / LMG 5710 / NBRC 13948 / NRRL B-527 / VKM B-1787 / 2291 / W).